The following is a 286-amino-acid chain: ATP synthase gamma chain (286 aa).

This sequence belongs to the ATPase gamma chain family. F-type ATPases have 2 components, CF(1) - the catalytic core - and CF(0) - the membrane proton channel. CF(1) has five subunits: alpha(3), beta(3), gamma(1), delta(1), epsilon(1). CF(0) has three main subunits: a, b and c.

Its subcellular location is the cell membrane. Produces ATP from ADP in the presence of a proton gradient across the membrane. The gamma chain is believed to be important in regulating ATPase activity and the flow of protons through the CF(0) complex. In Ureaplasma parvum serovar 3 (strain ATCC 27815 / 27 / NCTC 11736), this protein is ATP synthase gamma chain.